Reading from the N-terminus, the 371-residue chain is Aminomethyltransferase (371 aa).

This sequence belongs to the GcvT family. As to quaternary structure, the glycine cleavage system is composed of four proteins: P, T, L and H.

It carries out the reaction N(6)-[(R)-S(8)-aminomethyldihydrolipoyl]-L-lysyl-[protein] + (6S)-5,6,7,8-tetrahydrofolate = N(6)-[(R)-dihydrolipoyl]-L-lysyl-[protein] + (6R)-5,10-methylene-5,6,7,8-tetrahydrofolate + NH4(+). In terms of biological role, the glycine cleavage system catalyzes the degradation of glycine. The polypeptide is Aminomethyltransferase (Pectobacterium atrosepticum (strain SCRI 1043 / ATCC BAA-672) (Erwinia carotovora subsp. atroseptica)).